Here is a 76-residue protein sequence, read N- to C-terminus: uncharacterized protein (76 aa).

A helical transmembrane segment spans residues 24 to 44; sequence GAIFLVCYPLYCVVCFVSVLC.

It localises to the membrane. This is an uncharacterized protein from Schizosaccharomyces pombe (strain 972 / ATCC 24843) (Fission yeast).